The chain runs to 190 residues: Xanthine phosphoribosyltransferase 2 (190 aa).

The xanthine site is built by Leu20 and Asn27. 5-phospho-alpha-D-ribose 1-diphosphate is bound at residue 129 to 133 (ANGCA). Lys157 serves as a coordination point for xanthine.

This sequence belongs to the purine/pyrimidine phosphoribosyltransferase family. Xpt subfamily. As to quaternary structure, homodimer.

The protein localises to the cytoplasm. It carries out the reaction XMP + diphosphate = xanthine + 5-phospho-alpha-D-ribose 1-diphosphate. Its pathway is purine metabolism; XMP biosynthesis via salvage pathway; XMP from xanthine: step 1/1. Its function is as follows. Converts the preformed base xanthine, a product of nucleic acid breakdown, to xanthosine 5'-monophosphate (XMP), so it can be reused for RNA or DNA synthesis. This Clostridium botulinum (strain Langeland / NCTC 10281 / Type F) protein is Xanthine phosphoribosyltransferase 2.